The following is a 75-amino-acid chain: Small ribosomal subunit protein eS28 (75 aa).

The protein belongs to the eukaryotic ribosomal protein eS28 family.

The polypeptide is Small ribosomal subunit protein eS28 (Natronomonas pharaonis (strain ATCC 35678 / DSM 2160 / CIP 103997 / JCM 8858 / NBRC 14720 / NCIMB 2260 / Gabara) (Halobacterium pharaonis)).